Consider the following 637-residue polypeptide: Sphingomyelin phosphodiesterase B (637 aa).

Positions 1-20 (MKVKAPILLLFVFLINFCFS) are cleaved as a signal peptide. The N-linked (GlcNAc...) asparagine glycan is linked to asparagine 73. In terms of domain architecture, Saposin B-type spans 73 to 155 (NGTKCDICKF…GFVGFCPYVP (83 aa)). Intrachain disulfides connect cysteine 77/cysteine 151, cysteine 80/cysteine 145, and cysteine 108/cysteine 119. Asparagine 128 and asparagine 157 each carry an N-linked (GlcNAc...) asparagine glycan. Aspartate 191 and histidine 193 together coordinate Zn(2+). Cysteine 212 and cysteine 233 are joined by a disulfide. Aspartate 263 provides a ligand contact to Zn(2+). N-linked (GlcNAc...) asparagine glycosylation is present at asparagine 279. Position 304 (asparagine 304) interacts with Zn(2+). Asparagine 377 is a glycosylation site (N-linked (GlcNAc...) asparagine). Zn(2+) is bound by residues histidine 407, histidine 441, and histidine 443. Asparagine 523 and asparagine 546 each carry an N-linked (GlcNAc...) asparagine glycan. Residues cysteine 582 and cysteine 595 are joined by a disulfide bond. N-linked (GlcNAc...) asparagine glycosylation occurs at asparagine 606.

This sequence belongs to the acid sphingomyelinase family. Requires Zn(2+) as cofactor.

The protein resides in the secreted. Converts sphingomyelin to ceramide. The sequence is that of Sphingomyelin phosphodiesterase B (sgmB) from Dictyostelium discoideum (Social amoeba).